Consider the following 96-residue polypeptide: Acylphosphatase (96 aa).

The Acylphosphatase-like domain occupies 9-96 (CAEIYVSGRV…DTFTDFFIKR (88 aa)). Active-site residues include Arg24 and Asn42.

The protein belongs to the acylphosphatase family.

It carries out the reaction an acyl phosphate + H2O = a carboxylate + phosphate + H(+). The polypeptide is Acylphosphatase (acyP) (Methanococcoides burtonii (strain DSM 6242 / NBRC 107633 / OCM 468 / ACE-M)).